A 102-amino-acid polypeptide reads, in one-letter code: NADH-quinone oxidoreductase subunit K (102 aa).

3 helical membrane-spanning segments follow: residues 5-25 (LSHF…GIIL), 30-50 (IIVV…NLVS), and 62-82 (VFSL…LAIL).

Belongs to the complex I subunit 4L family. In terms of assembly, NDH-1 is composed of 14 different subunits. Subunits NuoA, H, J, K, L, M, N constitute the membrane sector of the complex.

Its subcellular location is the cell inner membrane. It carries out the reaction a quinone + NADH + 5 H(+)(in) = a quinol + NAD(+) + 4 H(+)(out). NDH-1 shuttles electrons from NADH, via FMN and iron-sulfur (Fe-S) centers, to quinones in the respiratory chain. The immediate electron acceptor for the enzyme in this species is believed to be ubiquinone. Couples the redox reaction to proton translocation (for every two electrons transferred, four hydrogen ions are translocated across the cytoplasmic membrane), and thus conserves the redox energy in a proton gradient. The polypeptide is NADH-quinone oxidoreductase subunit K (Methylocella silvestris (strain DSM 15510 / CIP 108128 / LMG 27833 / NCIMB 13906 / BL2)).